Reading from the N-terminus, the 431-residue chain is Histidinol dehydrogenase (431 aa).

NAD(+) contacts are provided by tyrosine 131, glutamine 193, and asparagine 216. Serine 239, glutamine 261, and histidine 264 together coordinate substrate. Zn(2+) is bound by residues glutamine 261 and histidine 264. Active-site proton acceptor residues include glutamate 329 and histidine 330. Positions 330, 363, 417, and 422 each coordinate substrate. Aspartate 363 contacts Zn(2+). Histidine 422 contacts Zn(2+).

This sequence belongs to the histidinol dehydrogenase family. The cofactor is Zn(2+).

The enzyme catalyses L-histidinol + 2 NAD(+) + H2O = L-histidine + 2 NADH + 3 H(+). Its pathway is amino-acid biosynthesis; L-histidine biosynthesis; L-histidine from 5-phospho-alpha-D-ribose 1-diphosphate: step 9/9. Functionally, catalyzes the sequential NAD-dependent oxidations of L-histidinol to L-histidinaldehyde and then to L-histidine. The polypeptide is Histidinol dehydrogenase (Clostridium acetobutylicum (strain ATCC 824 / DSM 792 / JCM 1419 / IAM 19013 / LMG 5710 / NBRC 13948 / NRRL B-527 / VKM B-1787 / 2291 / W)).